A 389-amino-acid polypeptide reads, in one-letter code: MKWMVVVLLCLQLLEAKVVKVPLKKLKSLRETMKEKGLLEEFLKNHKYDPAQKYRYTDFSVAYEPMAYMDAAYFGEISIGTPPQNFLVLFDTGSSNLWVPSVYCQTQACTGHTRFNPSQSSTYSTNGQTFSLQYGSGSLTGFFGYDTLTVQSIQVPNQEFGLSENEPGTNFVYAQFDGIMGMAYPSLAMGGATTALQGMLQEGALTSPVFSFYLSNQQGSQNGGAVIFGGVDNSLYQGQIYWAPVTQELYWQIGIEEFLIGGQASGWCSQGCQAIVDTGTSLLTVPQQYMSALLQATGAQEDQYGQFFVNCNYIQNLPTFTFIINGVQFPLPPSSYILNNNGYCTVGVEPTYLPSQNGQPLWILGDVFLRSYYSVYDMGNNRVGFATAA.

A signal peptide spans 1–16; that stretch reads MKWMVVVLLCLQLLEA. Residues 17–59 constitute a propeptide, activation peptide; the sequence is KVVKVPLKKLKSLRETMKEKGLLEEFLKNHKYDPAQKYRYTDF. Positions 73–386 constitute a Peptidase A1 domain; that stretch reads YFGEISIGTP…DMGNNRVGFA (314 aa). D91 is a catalytic residue. 2 disulfides stabilise this stretch: C104–C109 and C268–C272. D277 is a catalytic residue. C311 and C344 are oxidised to a cystine.

This sequence belongs to the peptidase A1 family.

It is found in the secreted. The catalysed reaction is More restricted specificity than pepsin A, but shows preferential cleavage at Tyr-|-Xaa bonds. High activity on hemoglobin.. In terms of biological role, hydrolyzes a variety of proteins. The polypeptide is Gastricsin (PGC) (Rhinolophus ferrumequinum (Greater horseshoe bat)).